The primary structure comprises 367 residues: Aurora kinase (367 aa).

Polar residues-rich tracts occupy residues 1–29 and 37–48; these read MQRNSLVNIKLNANSPSKKTTTRPNTSRI and HSPQQRNPNSKI. The interval 1–52 is disordered; that stretch reads MQRNSLVNIKLNANSPSKKTTTRPNTSRINKPWRISHSPQQRNPNSKIPSPV. Residue serine 5 is modified to Phosphoserine; by autocatalysis. At serine 76 the chain carries Phosphoserine. Positions 104 to 355 constitute a Protein kinase domain; the sequence is FELGKKLGKG…LGDVKMHPWI (252 aa). ATP is bound by residues 110-118 and lysine 133; that span reads LGKGKFGKV. The Proton acceptor role is filled by aspartate 227. Threonine 260 is modified (phosphothreonine; by autocatalysis).

This sequence belongs to the protein kinase superfamily. Ser/Thr protein kinase family. Aurora subfamily. Component of the CPC complex at least composed of IPL1, BIR1 and SLI15.

It localises to the nucleus. It is found in the cytoplasm. The protein resides in the cytoskeleton. Its subcellular location is the spindle. The protein localises to the chromosome. It localises to the centromere. It is found in the kinetochore. It catalyses the reaction L-seryl-[protein] + ATP = O-phospho-L-seryl-[protein] + ADP + H(+). The catalysed reaction is L-threonyl-[protein] + ATP = O-phospho-L-threonyl-[protein] + ADP + H(+). In terms of biological role, component of the chromosomal passenger complex (CPC), a complex that acts as a key regulator of chromosome segregation and cytokinesis. Has a role in error-correction of aberrent kinetochore-microtubule attachments to ensure that sister kinetochores become bioriented and connect to opposite poles by promoting spindle assembly checkpoint signaling. Acts in opposition to the phosphatase PP1. Not required for kinetochore detachment from microtubules during replication of centromeric DNA. Phosphorylates histone H3 to form H3S10ph during mitosis and meiosis. Phosphorylates CNN1, which contributes to the enrichment of CNN1 on anaphase kinetochores. Phosphorylates RGD1. In Saccharomyces cerevisiae (strain ATCC 204508 / S288c) (Baker's yeast), this protein is Aurora kinase (IPL1).